We begin with the raw amino-acid sequence, 376 residues long: Putative 12-oxophytodienoate reductase 13 (376 aa).

FMN-binding positions include 25 to 27 (PLT), Ala-58, and Gln-99. 165–168 (HGAH) provides a ligand contact to substrate. FMN-binding positions include Arg-217, Gly-301, and 322–323 (GR).

It belongs to the NADH:flavin oxidoreductase/NADH oxidase family. FMN is required as a cofactor.

Functionally, putative oxophytodienoate reductase that may be involved in the biosynthesis or metabolism of oxylipin signaling molecules. The protein is Putative 12-oxophytodienoate reductase 13 (OPR13) of Oryza sativa subsp. japonica (Rice).